The sequence spans 457 residues: NADP-specific glutamate dehydrogenase (457 aa).

Lys-111 is an active-site residue.

The protein belongs to the Glu/Leu/Phe/Val dehydrogenases family. In terms of assembly, homohexamer.

It catalyses the reaction L-glutamate + NADP(+) + H2O = 2-oxoglutarate + NH4(+) + NADPH + H(+). This is NADP-specific glutamate dehydrogenase (gdhA) from Agaricus bisporus (White button mushroom).